Consider the following 95-residue polypeptide: Translation initiation factor 1A (95 aa).

The S1-like domain maps to 7-81 (GRKNLRMPED…DKADVTWRYE (75 aa)).

This sequence belongs to the eIF-1A family.

Seems to be required for maximal rate of protein biosynthesis. Enhances ribosome dissociation into subunits and stabilizes the binding of the initiator Met-tRNA(I) to 40 S ribosomal subunits. The sequence is that of Translation initiation factor 1A (eIF1A) from Halobacterium salinarum (strain ATCC 29341 / DSM 671 / R1).